A 68-amino-acid polypeptide reads, in one-letter code: U-reduvitoxin-Pr3a (68 aa).

The first 22 residues, 1 to 22, serve as a signal peptide directing secretion; that stretch reads MKAGMKLVLVLVIASIALLALA. 3 cysteine pairs are disulfide-bonded: Cys29/Cys47, Cys36/Cys52, and Cys46/Cys59.

It belongs to the venom Ptu1-like knottin family. As to expression, expressed by the venom gland.

Its subcellular location is the secreted. Binds reversibly and blocks P/Q-type voltage-gated calcium channels (Cav). This Platymeris rhadamanthus (Red spot assassin bug) protein is U-reduvitoxin-Pr3a.